A 141-amino-acid polypeptide reads, in one-letter code: Large ribosomal subunit protein uL22c (141 aa).

The protein belongs to the universal ribosomal protein uL22 family. Part of the 50S ribosomal subunit.

It is found in the plastid. The protein resides in the chloroplast. Its function is as follows. This protein binds specifically to 23S rRNA. The globular domain of the protein is located near the polypeptide exit tunnel on the outside of the subunit, while an extended beta-hairpin is found that lines the wall of the exit tunnel in the center of the 70S ribosome. This chain is Large ribosomal subunit protein uL22c (rpl22), found in Chloranthus spicatus (Chulantree).